We begin with the raw amino-acid sequence, 515 residues long: Hyccin (515 aa).

The span at 358 to 378 (STSQSALSNSSNTSSKNLLGK) shows a compositional bias: low complexity. Disordered stretches follow at residues 358 to 410 (STSQ…TQRA) and 491 to 515 (TDLPVLSKQPNQQRPPSISITLSTD). The span at 389–403 (AGREKEGETCREHLS) shows a compositional bias: basic and acidic residues. Residues 498 to 515 (KQPNQQRPPSISITLSTD) are compositionally biased toward polar residues.

Belongs to the Hyccin family. In terms of assembly, component of a phosphatidylinositol 4-kinase (PI4K) complex.

Its subcellular location is the cytoplasm. The protein localises to the cytosol. The protein resides in the cell membrane. In terms of biological role, component of a complex required to localize phosphatidylinositol 4-kinase (PI4K) to the plasma membrane. The complex acts as a regulator of phosphatidylinositol 4-phosphate (PtdIns(4)P) synthesis. This Gallus gallus (Chicken) protein is Hyccin (HYCC1).